We begin with the raw amino-acid sequence, 312 residues long: Ribosomal RNA small subunit methyltransferase H (312 aa).

S-adenosyl-L-methionine contacts are provided by residues 35 to 37, aspartate 55, phenylalanine 79, aspartate 101, and glutamine 108; that span reads GGH.

Belongs to the methyltransferase superfamily. RsmH family.

It is found in the cytoplasm. It carries out the reaction cytidine(1402) in 16S rRNA + S-adenosyl-L-methionine = N(4)-methylcytidine(1402) in 16S rRNA + S-adenosyl-L-homocysteine + H(+). Specifically methylates the N4 position of cytidine in position 1402 (C1402) of 16S rRNA. In Buchnera aphidicola subsp. Schizaphis graminum (strain Sg), this protein is Ribosomal RNA small subunit methyltransferase H.